A 356-amino-acid polypeptide reads, in one-letter code: S-adenosylmethionine:tRNA ribosyltransferase-isomerase (356 aa).

The protein belongs to the QueA family. Monomer.

The protein localises to the cytoplasm. It catalyses the reaction 7-aminomethyl-7-carbaguanosine(34) in tRNA + S-adenosyl-L-methionine = epoxyqueuosine(34) in tRNA + adenine + L-methionine + 2 H(+). The protein operates within tRNA modification; tRNA-queuosine biosynthesis. In terms of biological role, transfers and isomerizes the ribose moiety from AdoMet to the 7-aminomethyl group of 7-deazaguanine (preQ1-tRNA) to give epoxyqueuosine (oQ-tRNA). The protein is S-adenosylmethionine:tRNA ribosyltransferase-isomerase of Xanthomonas campestris pv. campestris (strain 8004).